The chain runs to 863 residues: Axin-1 (863 aa).

The tract at residues 1-81 is disordered; that stretch reads MNVQEQGFPL…PEGSASPTPP (81 aa). The Tankyrase-binding motif signature appears at 20 to 29; that stretch reads APRPPVPGEE. Positions 34 to 61 are enriched in polar residues; the sequence is STDSRPVNHSFCSGKGTSIKSETSTATP. Position 75 is a phosphoserine (serine 75). Position 77 is a phosphoserine; by CK1 (serine 77). The RGS domain maps to 88 to 211; sequence SLHSLLDDQD…LKSDIYLEYT (124 aa). The tract at residues 209-338 is interaction with TP53; that stretch reads EYTRTGSESP…DADTLSLTDS (130 aa). 3 disordered regions span residues 215–240, 249–268, and 315–344; these read SESPKVCSDQSSGSGTGKGMSGYLPT, CDQDADEDDGRDPLPPSRLT, and ATSANDSEQQSLSSDADTLSLTDSSVDGIP. Position 217 is a phosphoserine (serine 217). Acidic residues predominate over residues 249 to 258; the sequence is CDQDADEDDG. A compositionally biased stretch (low complexity) spans 325–339; the sequence is SLSSDADTLSLTDSS. Positions 348 to 432 are interaction with GSK3B; the sequence is IRKQHRREMQ…EDGEMPSGPM (85 aa). The interval 353-411 is interaction with SIAH1; it reads RREMQESIQVNGRVPLPHIPRTYRMPKEIRVEPQKFAEELIHRLEAVQRTREAEEKLEE. Residues 433–501 form an interaction with beta-catenin region; that stretch reads ASHKLPSVPA…SPDSGHVAKT (69 aa). Residue serine 468 is modified to Phosphoserine; by CK1. Threonine 480 is subject to Phosphothreonine; by GSK3-beta. At serine 485 the chain carries Phosphoserine; by GSK3-beta. Phosphoserine is present on residues serine 492 and serine 509. The segment at 505–758 is interaction with RNF111; that stretch reads GGTASGHGKH…PVLSVVPAVS (254 aa). Residues 529 to 542 are compositionally biased toward basic residues; sequence HHRHVHHHVHHNSA. Disordered stretches follow at residues 529–624 and 642–664; these read HHRH…DAEK and HRKAGHGSSGLRKQQAHESSRPL. The segment covering 543 to 554 has biased composition (basic and acidic residues); that stretch reads RPKEQMEAEVAR. The interval 572–790 is interaction with PPP2CA; that stretch reads PRSYSENAGT…CDSIVVAYYF (219 aa). Residues 575–584 are compositionally biased toward polar residues; that stretch reads YSENAGTTLS. The segment at 678 to 753 is interaction with HIPK2; it reads AQLRNSVQPS…RPACAPVLSV (76 aa). In terms of domain architecture, DIX spans 781 to 863; sequence CDSIVVAYYF…KIIGKVEKVD (83 aa). Glycyl lysine isopeptide (Lys-Gly) (interchain with G-Cter in SUMO) cross-links involve residues lysine 858 and lysine 861.

Homodimer. Component of the beta-catenin destruction complex, containing at least CTNNB1, an axin and GSK3B, that regulates CTNNB1 protein levels through phosphorylation and ubiquitination. Interacts with GSK3B; the interaction hyperphosphorylates CTNNB1 leading to its ubiquitination and destruction. Interacts with DAXX; the interaction stimulates the interaction of DAXX with TP53, stimulates 'Ser-46' phosphorylation of TP53 and induces cell death on UV irradiation. Also interacts with APC, RNF111, SMAD6 and SMAD7. Interacts (via the C-terminal) with PPP1CA; the interaction dephosphorylates AXIN1 and regulates interaction with GSK3B. Interacts with PPP2CA; the interaction dephosphorylates AXIN1. Interacts with MDFI; the interaction decreases AXIN1-mediated JUN N-terminal kinase (JNK) activation. Interacts with MDFIC; the interaction inhibits beta-cateninin-mediated signaling and AXIN1-mediated JUN N-terminal kinase (JNK) activation. Binds ANKRD6, PIAS1, PIAS2, PIAS4, SUMO1, MAP3K1 and MAP3K4. Component of the AXIN1-HIPK2-TP53 complex. Interacts directly in the complex with TP53 and HIPK2. Interacts with DIXDC1; the interaction prevents interaction with MAP3K1. Interacts with AIDA; the interaction blocks the AXIN1-mediated JNK activation through disrupting AXIN1 homodimerization and Wnt signaling. Interacts with LRP5 (via its phosphorylated PPPSP motifs); the interaction is stimulated by WNT1 and GSK3B and activates beta-catenin signaling. Interacts with CTNNB1 (via the armadillo repeats 2-7). Interacts with MACF1. Found in a complex composed of MACF1, APC, AXIN1, CTNNB1 and GSK3B. Interacts with TNKS. Interacts with DAB2; the interaction is mutually exclusive with the AXIN1:PPP1CA interaction. Interacts with ZBED3 (via PPPSP motif); the interaction is direct, enhanced by protein kinase GSK3B and casein kinase CSNK1E activities and decreases GSK3B-induced beta-catenin serine and threonine phosphorylations. Interacts with WDR26. Interacts with GID8. Interacts with SIAH1 and SIAH2; both probably catalyze AXIN1 ubiquitination and subsequent proteasome-mediated ubiquitin-dependent degradation. Interaction with GSK3B and AXIN1 is competitive. Post-translationally, phosphorylation and dephosphorylation of AXIN1 regulates assembly and function of the beta-catenin complex. Phosphorylated by CK1 and GSK3B. Dephosphorylated by PPP1CA and PPP2CA. Phosphorylation by CK1 enhances binding of GSK3B to AXIN1. Also phosphorylated by CDK2 which regulates interaction with CTNBB1. In terms of processing, ADP-ribosylated by tankyrase TNKS and TNKS2. Poly-ADP-ribosylated protein is recognized by RNF146, followed by ubiquitination and subsequent activation of the Wnt signaling pathway. Ubiquitinated by RNF146 when poly-ADP-ribosylated, leading to its degradation and subsequent activation of the Wnt signaling pathway. Deubiquitinated by USP34, deubiquitinated downstream of beta-catenin stabilization step: deubiquitination is important for nuclear accumulation during Wnt signaling to positively regulate beta-catenin (CTNBB1)-mediated transcription. Sumoylation at Lys-858 and Lys-861 prevents ubiquitination and degradation. Sumoylation is required for AXIN1-mediated JNK activation. Ubiquitination by SIAH1 and SIAH2 induces its proteasomal degradation as part of the activation of the Wnt signaling pathway. Expressed in embryonic stem cells.

It is found in the cytoplasm. Its subcellular location is the nucleus. The protein resides in the cell membrane. It localises to the membrane. Its function is as follows. Component of the beta-catenin destruction complex required for regulating CTNNB1 levels through phosphorylation and ubiquitination, and modulating Wnt-signaling. Controls dorsoventral patterning via two opposing effects; down-regulates CTNNB1 to inhibit the Wnt signaling pathway and ventralize embryos, but also dorsalizes embryos by activating a Wnt-independent JNK signaling pathway. In Wnt signaling, probably facilitates the phosphorylation of CTNNB1 and APC by GSK3B. Likely to function as a tumor suppressor. Facilitates the phosphorylation of TP53 by HIPK2 upon ultraviolet irradiation. Enhances TGF-beta signaling by recruiting the RNF111 E3 ubiquitin ligase and promoting the degradation of inhibitory SMAD7. Also a component of the AXIN1-HIPK2-TP53 complex which controls cell growth, apoptosis and development. The polypeptide is Axin-1 (Axin1) (Mus musculus (Mouse)).